The following is a 160-amino-acid chain: Nucleotide-binding protein CPS_1098 (160 aa).

This sequence belongs to the YajQ family.

In terms of biological role, nucleotide-binding protein. The sequence is that of Nucleotide-binding protein CPS_1098 from Colwellia psychrerythraea (strain 34H / ATCC BAA-681) (Vibrio psychroerythus).